Reading from the N-terminus, the 151-residue chain is NADH-quinone oxidoreductase subunit I 2 (151 aa).

2 consecutive 4Fe-4S ferredoxin-type domains span residues 49–82 (PRLN…VTSE) and 93–122 (VTFT…LTQD). 8 residues coordinate [4Fe-4S] cluster: C62, C65, C68, C72, C102, C105, C108, and C112.

This sequence belongs to the complex I 23 kDa subunit family. As to quaternary structure, NDH-1 is composed of 14 different subunits. Subunits NuoA, H, J, K, L, M, N constitute the membrane sector of the complex. It depends on [4Fe-4S] cluster as a cofactor.

The protein resides in the cell inner membrane. It catalyses the reaction a quinone + NADH + 5 H(+)(in) = a quinol + NAD(+) + 4 H(+)(out). NDH-1 shuttles electrons from NADH, via FMN and iron-sulfur (Fe-S) centers, to quinones in the respiratory chain. The immediate electron acceptor for the enzyme in this species is believed to be ubiquinone. Couples the redox reaction to proton translocation (for every two electrons transferred, four hydrogen ions are translocated across the cytoplasmic membrane), and thus conserves the redox energy in a proton gradient. This is NADH-quinone oxidoreductase subunit I 2 from Solibacter usitatus (strain Ellin6076).